Consider the following 304-residue polypeptide: DCN1-like protein 3 (304 aa).

Disordered stretches follow at residues 1 to 87 (MGQC…EESS) and 284 to 304 (EGEG…EEQT). Gly2 carries N-myristoyl glycine lipidation. The DCUN1 domain maps to 86–278 (SSLQRLEELF…LFDTFVEWEM (193 aa)).

Part of a complex containing DCUN1D3, CUL3 and RBX1. Interacts (via the DCUN1 domain) with the unneddylated cullins: interacts with CUL1, CUL2, CUL3, CUL4A, CUL4B and CUL5; these interactions promote the cullin neddylation and the identity of the cullin dictates the affinity of the interaction. Interacts preferentially with CUL3; this interaction triggers the relocalization of CUL3 to the cell membrane where CUL3 is neddylated. Interacts (via DCUN1 domain) with RBX1. May also interact with regulators or subunits of cullin-RING ligases such as RNF7, ELOB and DDB1; these interactions are bridged by cullins. Interacts (via DCUN1 domain) with CAND1; this interaction is bridged by cullins and strongly inhibits cullin neddylation. These CAND-cullin-DCNL complexes can only be neddylated in the presence of a substrate adapter. Interacts (via DCUN1 domain) with the N-terminally acetylated form of UBE2M and UBE2F.

It localises to the cell membrane. Its subcellular location is the cytoplasm. The protein resides in the nucleus. The protein localises to the perinuclear region. Contributes to the neddylation of all cullins by transferring NEDD8 from N-terminally acetylated NEDD8-conjugating E2s enzyme to different cullin C-terminal domain-RBX complexes and may play a role in the cell cycle progression by regulating the SCF ubiquitin E3 ligase complex, after UV damage. At the cell membrane, can promote and as well inhibit cullins neddylation. The protein is DCN1-like protein 3 of Bos taurus (Bovine).